The chain runs to 418 residues: AP-3 complex subunit mu-2 (418 aa).

The MHD domain maps to 176-417 (NNEAYFDVVE…MTKAGKFQVR (242 aa)).

This sequence belongs to the adaptor complexes medium subunit family. In terms of assembly, adaptor protein complex 3 (AP-3) is a heterotetramer composed of two large adaptins (delta-type subunit AP3D1 and beta-type subunit AP3B1 or AP3B2), a medium adaptin (mu-type subunit AP3M1 or AP3M2) and a small adaptin (sigma-type subunit APS1 or AP3S2). AP-3 associates with the BLOC-1 complex.

The protein localises to the golgi apparatus. Its subcellular location is the cytoplasmic vesicle membrane. In terms of biological role, component of the adaptor complexes which link clathrin to receptors in coated vesicles. Clathrin-associated protein complexes are believed to interact with the cytoplasmic tails of membrane proteins, leading to their selection and concentration. Ap47 is a subunit of the plasma membrane adaptor. In concert with the BLOC-1 complex, AP-3 is required to target cargos into vesicles assembled at cell bodies for delivery into neurites and nerve terminals. In Rattus norvegicus (Rat), this protein is AP-3 complex subunit mu-2 (Ap3m2).